We begin with the raw amino-acid sequence, 71 residues long: MPSVKIKENEPFDVALRRFKRACEKAGILADVRARECYEKPTTVRKREAAAAVKRHAKKVQRESKKFTRLY.

The protein belongs to the bacterial ribosomal protein bS21 family.

The protein is Small ribosomal subunit protein bS21 of Cellvibrio japonicus (strain Ueda107) (Pseudomonas fluorescens subsp. cellulosa).